We begin with the raw amino-acid sequence, 1480 residues long: Heme-responsive zinc finger transcription factor HAP1 (1480 aa).

Residues M1–S50 are compositionally biased toward polar residues. The segment at M1–K56 is disordered. Residues C64, C67, C74, C81, C84, and C93 each coordinate Zn(2+). A DNA-binding region (zn(2)-C6 fungal-type) is located at residues C64–C93. The stretch at E105–S134 forms a coiled coil. Positions K126 to N208 are disordered. The span at K130 to S142 shows a compositional bias: low complexity. Polar residues-rich tracts occupy residues Y143–F152 and T160–H176. A compositionally biased stretch (low complexity) spans Q177–N208. The tract at residues K244–S441 is heme-responsive; required for HMC formation. HRM repeat units lie at residues K280–H285, K296–H301, K320–H325, R344–H349, K386–H391, and R412–H417. 2 stretches are compositionally biased toward polar residues: residues S429–H444 and Q703–L731. 2 disordered regions span residues S429–D456 and Q703–Q764. The segment covering N732–N756 has biased composition (low complexity). The stretch at K1189–Q1194 is one HRM 7 repeat. Positions T1381–S1408 are disordered. Residues D1385–S1408 are compositionally biased toward polar residues.

Binds DNA as a homodimer. Interacts with SRO9 and YDJ1. In the absence of heme, binds to at least four cellular proteins, including YDJ1 and SRO9, forming a high-molecular-weight complex (HMC) which results in repression of its activity and dictates its DNA-binding specificity.

It localises to the nucleus. Functionally, regulation of oxygen dependent gene expression. It modulates the expression of Iso-1 (CYP1) and Iso-2 (CYP3) cytochrome c. In response to heme, promotes transcription of genes encoding functions required for respiration, controlling oxidative damage and repression of anaerobic genes. Binds to the sequence 5'-CGGNNNTNNCGG-3'. Is non-functional in terms of iso-1 cytochrome c expression in strain S288c and its derivatives. The sequence is that of Heme-responsive zinc finger transcription factor HAP1 (HAP1) from Saccharomyces cerevisiae (strain Kyokai no. 7 / NBRC 101557) (Baker's yeast).